The following is a 281-amino-acid chain: Arylamine N-acetyltransferase / N-hydroxyarylamine O-acetyltransferase (281 aa).

Cysteine 69 serves as the catalytic Acyl-thioester intermediate. Catalysis depends on residues histidine 107 and aspartate 122.

This sequence belongs to the arylamine N-acetyltransferase family. In terms of assembly, monomer and homodimer.

The protein localises to the cytoplasm. It carries out the reaction an arylamine + acetyl-CoA = an N-acetylarylamine + CoA. The catalysed reaction is an N-hydroxyarylamine + acetyl-CoA = an N-acetoxyarylamine + CoA. Its activity is regulated as follows. Inhibited by N-ethylmaleimide and iodoacetamide. Catalyzes both the acetyl-CoA-dependent N-acetylation of aromatic amines and the O-acetylation of N-hydroxyarylamines. In vitro, catalyzes the O-acetylation of N-hydroxy-Glu-P-1, and the N-acetylation of isoniazid and 2-aminofluorene. The protein is Arylamine N-acetyltransferase / N-hydroxyarylamine O-acetyltransferase (nhoA) of Salmonella typhimurium (strain LT2 / SGSC1412 / ATCC 700720).